The primary structure comprises 197 residues: LexA repressor (197 aa).

The segment at residues 28–47 (VREIARRFRITPRGALLHLI) is a DNA-binding region (H-T-H motif). Active-site for autocatalytic cleavage activity residues include Ser-119 and Lys-156.

It belongs to the peptidase S24 family. As to quaternary structure, homodimer.

The catalysed reaction is Hydrolysis of Ala-|-Gly bond in repressor LexA.. Its function is as follows. Represses a number of genes involved in the response to DNA damage (SOS response), including recA and lexA. In the presence of single-stranded DNA, RecA interacts with LexA causing an autocatalytic cleavage which disrupts the DNA-binding part of LexA, leading to derepression of the SOS regulon and eventually DNA repair. The chain is LexA repressor from Thermotoga sp. (strain RQ2).